Reading from the N-terminus, the 61-residue chain is Photosystem II reaction center protein K (61 aa).

Residues 1–24 constitute a propeptide that is removed on maturation; it reads MLNILNLICICLNFALYSSSFFFT. A helical membrane pass occupies residues 40 to 60; sequence MPVIPLFFFLLAFVWQAAVSF.

It belongs to the PsbK family. In terms of assembly, PSII is composed of 1 copy each of membrane proteins PsbA, PsbB, PsbC, PsbD, PsbE, PsbF, PsbH, PsbI, PsbJ, PsbK, PsbL, PsbM, PsbT, PsbX, PsbY, PsbZ, Psb30/Ycf12, at least 3 peripheral proteins of the oxygen-evolving complex and a large number of cofactors. It forms dimeric complexes.

The protein resides in the plastid. It localises to the chloroplast thylakoid membrane. Functionally, one of the components of the core complex of photosystem II (PSII). PSII is a light-driven water:plastoquinone oxidoreductase that uses light energy to abstract electrons from H(2)O, generating O(2) and a proton gradient subsequently used for ATP formation. It consists of a core antenna complex that captures photons, and an electron transfer chain that converts photonic excitation into a charge separation. The polypeptide is Photosystem II reaction center protein K (Populus alba (White poplar)).